We begin with the raw amino-acid sequence, 435 residues long: 3-ketoacyl-CoA thiolase (435 aa).

The active-site Acyl-thioester intermediate is Cys98. Active-site proton acceptor residues include His391 and Cys421.

It belongs to the thiolase-like superfamily. Thiolase family. Heterotetramer of two alpha chains (FadJ) and two beta chains (FadI).

It localises to the cytoplasm. The catalysed reaction is an acyl-CoA + acetyl-CoA = a 3-oxoacyl-CoA + CoA. Its pathway is lipid metabolism; fatty acid beta-oxidation. Its function is as follows. Catalyzes the final step of fatty acid oxidation in which acetyl-CoA is released and the CoA ester of a fatty acid two carbons shorter is formed. The polypeptide is 3-ketoacyl-CoA thiolase (Vibrio vulnificus (strain YJ016)).